Consider the following 441-residue polypeptide: Ribosomal protein uS12 methylthiotransferase RimO (441 aa).

Residues 8–118 (PKIGFVSLGC…VLEHVHHYVP (111 aa)) enclose the MTTase N-terminal domain. The [4Fe-4S] cluster site is built by Cys-17, Cys-53, Cys-82, Cys-150, Cys-154, and Cys-157. The 238-residue stretch at 136 to 373 (LTPRHYAYLK…MQLQQQISAE (238 aa)) folds into the Radical SAM core domain. Positions 376 to 441 (QEKVGREILV…DEYDLWGSRV (66 aa)) constitute a TRAM domain.

It belongs to the methylthiotransferase family. RimO subfamily. [4Fe-4S] cluster serves as cofactor.

It localises to the cytoplasm. The enzyme catalyses L-aspartate(89)-[ribosomal protein uS12]-hydrogen + (sulfur carrier)-SH + AH2 + 2 S-adenosyl-L-methionine = 3-methylsulfanyl-L-aspartate(89)-[ribosomal protein uS12]-hydrogen + (sulfur carrier)-H + 5'-deoxyadenosine + L-methionine + A + S-adenosyl-L-homocysteine + 2 H(+). Catalyzes the methylthiolation of an aspartic acid residue of ribosomal protein uS12. The sequence is that of Ribosomal protein uS12 methylthiotransferase RimO from Escherichia coli (strain UTI89 / UPEC).